Reading from the N-terminus, the 581-residue chain is Pyridine nucleotide-disulfide oxidoreductase domain-containing protein 2 (581 aa).

38 to 71 (VVIGAGHNGLVVAAYLQRLGVNTAVFERRHVIGG) is an FAD binding site.

Belongs to the carotenoid/retinoid oxidoreductase family. Interacts with COX5B; this interaction may contribute to localize PYROXD2 to the inner face of the inner mitochondrial membrane.

The protein resides in the mitochondrion matrix. Probable oxidoreductase that may play a role as regulator of mitochondrial function. This is Pyridine nucleotide-disulfide oxidoreductase domain-containing protein 2 from Pongo abelii (Sumatran orangutan).